The primary structure comprises 805 residues: Kinesin-like protein KIP3 (805 aa).

Residues Ser10–Ile438 enclose the Kinesin motor domain. Gly192–Thr199 provides a ligand contact to ATP. Positions Leu449–Lys481 form a coiled coil. The segment at Asn720–Lys805 is disordered. Positions Met764 to Gly773 are enriched in polar residues. Low complexity predominate over residues Pro774–Ala783. The segment covering Ser792–Lys805 has biased composition (polar residues).

The protein belongs to the TRAFAC class myosin-kinesin ATPase superfamily. Kinesin family. Kinesin II subfamily.

It is found in the cytoplasm. Its subcellular location is the cytoskeleton. The chain is Kinesin-like protein KIP3 (KIP3) from Saccharomyces cerevisiae (strain ATCC 204508 / S288c) (Baker's yeast).